The sequence spans 60 residues: Large ribosomal subunit protein uL30 (60 aa).

Belongs to the universal ribosomal protein uL30 family. As to quaternary structure, part of the 50S ribosomal subunit.

The polypeptide is Large ribosomal subunit protein uL30 (Paracidovorax citrulli (strain AAC00-1) (Acidovorax citrulli)).